Here is a 167-residue protein sequence, read N- to C-terminus: Alanine- and arginine-rich domain-containing protein (167 aa).

The disordered stretch occupies residues 140–167 (LKKRQDQELASKPQSPQDKEMNSECGSA).

As to expression, preferentially expressed in testis both in embryo and adult. Expressed at much lower level in other tissues.

The polypeptide is Alanine- and arginine-rich domain-containing protein (Aard) (Mus musculus (Mouse)).